A 311-amino-acid polypeptide reads, in one-letter code: Aquaporin Lacbi1:392091 (311 aa).

Residues methionine 1–leucine 16 are Cytoplasmic-facing. A helical membrane pass occupies residues alanine 17 to isoleucine 37. Over glutamine 38–glutamate 56 the chain is Extracellular. The helical transmembrane segment at histidine 57–phenylalanine 77 threads the bilayer. Residue arginine 78 is a topological domain, cytoplasmic. Residues valine 79–lysine 99 traverse the membrane as a helical segment. The short motif at asparagine 85–asparagine 87 is the NPA 1 element. Proline 100 is a topological domain (extracellular). The chain crosses the membrane as a helical span at residues leucine 101–valine 121. Residues arginine 122–glutamine 143 lie on the Cytoplasmic side of the membrane. Residues glycine 144–alanine 164 form a helical membrane-spanning segment. Over glutamate 165 to glutamate 168 the chain is Extracellular. A helical transmembrane segment spans residues alanine 169–valine 189. The Cytoplasmic segment spans residues tyrosine 190–histidine 215. The NPA 2 motif lies at asparagine 197–alanine 199. The chain crosses the membrane as a helical span at residues tryptophan 216–leucine 236. The Extracellular segment spans residues lysine 237–valine 311. The segment at aspartate 276–valine 311 is disordered. The segment covering glutamate 288–serine 298 has biased composition (basic and acidic residues). The segment covering serine 299–valine 311 has biased composition (polar residues). Asparagine 300 carries an N-linked (GlcNAc...) asparagine glycan.

The protein belongs to the MIP/aquaporin (TC 1.A.8) family.

It is found in the membrane. The enzyme catalyses H2O(in) = H2O(out). It catalyses the reaction NH4(+)(in) = NH4(+)(out). Functionally, water channel required to facilitate the transport of water across membranes. Also enables low but statistically significant ammonium permeability. May be involved in fungal nitrogen (ammonium) support of the plant host in symbiosis. This Laccaria bicolor (strain S238N-H82 / ATCC MYA-4686) (Bicoloured deceiver) protein is Aquaporin Lacbi1:392091.